Reading from the N-terminus, the 450-residue chain is Coiled-coil domain-containing protein 149-A (450 aa).

2 coiled-coil regions span residues 1 to 197 (MANQ…DRRK) and 259 to 286 (IQHQ…LEIS). The tract at residues 290-358 (SLPDDRTGRG…NGQVGTQLKE (69 aa)) is disordered. The span at 343–354 (PSGTRTNGQVGT) shows a compositional bias: polar residues.

This sequence belongs to the CCDC149 family.

The sequence is that of Coiled-coil domain-containing protein 149-A (ccdc149a) from Danio rerio (Zebrafish).